Consider the following 1904-residue polypeptide: Callose synthase 10 (1904 aa).

An HAT 1 repeat occupies V100–R132. 6 consecutive transmembrane segments (helical) span residues S491–F511, A532–M552, V562–V582, F594–G614, Y661–I681, and V722–G742. The LRR 1 repeat unit spans residues F678 to W701. LRR repeat units follow at residues L751–N774 and T925–N948. The stretch at Y1074–R1107 is one HAT 2 repeat. An LRR 4 repeat occupies F1159–S1181. 9 consecutive transmembrane segments (helical) span residues F1474–L1494, F1529–L1549, A1554–L1574, A1621–A1641, F1644–I1664, L1747–F1767, F1783–T1803, F1811–W1831, and A1853–S1873. The HAT 3 repeat unit spans residues L1659–G1691.

Belongs to the glycosyltransferase 48 family.

It localises to the cell membrane. It catalyses the reaction [(1-&gt;3)-beta-D-glucosyl](n) + UDP-alpha-D-glucose = [(1-&gt;3)-beta-D-glucosyl](n+1) + UDP + H(+). In terms of biological role, involved in sporophytic and gametophytic development. Required for normal plant development and for the proper accumulation of callose at cell plates, cll walls and plasmodesmata. During pollen formation, required for the entry of microspores into mitosis. During plant growth and development, callose is found as a transitory component of the cell plate in dividing cells, is a major component of pollen mother cell walls and pollen tubes, and is found as a structural component of plasmodesmatal canals. Required for proper cell division and tissue patterning throughout plant organs, including stomatal patterning. In Arabidopsis thaliana (Mouse-ear cress), this protein is Callose synthase 10 (CALS10).